A 195-amino-acid chain; its full sequence is Putative deoxynucleoside kinase (195 aa).

The sequence is that of Putative deoxynucleoside kinase from Frog virus 3 (isolate Goorha) (FV-3).